The primary structure comprises 340 residues: 4-amino-5-hydroxymethyl-2-methylpyrimidine phosphate synthase THI5 (340 aa).

An N6-(pyridoxal phosphate)lysine modification is found at K62. H66 is an active-site residue. A pyridoxal 5'-phosphate-binding site is contributed by 115–118 (GEFG). A CCCFC; essential for catalytic activity, may be the site of iron coordination motif is present at residues 195–199 (CCCFC).

It belongs to the NMT1/THI5 family. Homodimer. Requires Fe cation as cofactor.

It catalyses the reaction N(6)-(pyridoxal phosphate)-L-lysyl-[4-amino-5-hydroxymethyl-2-methylpyrimidine phosphate synthase] + L-histidyl-[4-amino-5-hydroxymethyl-2-methylpyrimidine phosphate synthase] + 2 Fe(3+) + 4 H2O = L-lysyl-[4-amino-5-hydroxymethyl-2-methylpyrimidine phosphate synthase] + (2S)-2-amino-5-hydroxy-4-oxopentanoyl-[4-amino-5-hydroxymethyl-2-methylpyrimidine phosphate synthase] + 4-amino-2-methyl-5-(phosphooxymethyl)pyrimidine + 3-oxopropanoate + 2 Fe(2+) + 2 H(+). Its pathway is cofactor biosynthesis; thiamine diphosphate biosynthesis. Its function is as follows. Responsible for the formation of the pyrimidine heterocycle in the thiamine biosynthesis pathway. Catalyzes the formation of hydroxymethylpyrimidine phosphate (HMP-P) from histidine and pyridoxal phosphate (PLP). The protein uses PLP and the active site histidine to form HMP-P, generating an inactive enzyme. The enzyme can only undergo a single turnover, which suggests it is a suicide enzyme. This is 4-amino-5-hydroxymethyl-2-methylpyrimidine phosphate synthase THI5 from Saccharomyces cerevisiae (strain ATCC 204508 / S288c) (Baker's yeast).